Reading from the N-terminus, the 122-residue chain is Protein FAM223A (122 aa).

This sequence belongs to the FAM223 family.

This is Protein FAM223A (FAM223A) from Homo sapiens (Human).